A 324-amino-acid chain; its full sequence is 2,3,4,5-tetrahydropyridine-2,6-dicarboxylate N-succinyltransferase (324 aa).

Asp173 and Glu190 together coordinate Mg(2+). Catalysis depends on Glu206, which acts as the Acyl-anhydride intermediate. Succinyl-CoA is bound by residues Arg208, Gly223, Ser226, Ala249, 264–265 (EA), Gly272, Lys284, and 297–300 (RRNS).

The protein belongs to the type 2 tetrahydrodipicolinate N-succinyltransferase family. Homotrimer.

The protein resides in the cytoplasm. It carries out the reaction (S)-2,3,4,5-tetrahydrodipicolinate + succinyl-CoA + H2O = (S)-2-succinylamino-6-oxoheptanedioate + CoA. Its pathway is amino-acid biosynthesis; L-lysine biosynthesis via DAP pathway; LL-2,6-diaminopimelate from (S)-tetrahydrodipicolinate (succinylase route): step 1/3. In terms of biological role, catalyzes the conversion of the cyclic tetrahydrodipicolinate (THDP) into the acyclic N-succinyl-L-2-amino-6-oxopimelate using succinyl-CoA. The protein is 2,3,4,5-tetrahydropyridine-2,6-dicarboxylate N-succinyltransferase of Geodermatophilus obscurus (strain ATCC 25078 / DSM 43160 / JCM 3152 / CCUG 61914 / KCC A-0152 / KCTC 9177 / NBRC 13315 / NRRL B-3577 / G-20).